A 369-amino-acid polypeptide reads, in one-letter code: Anhydro-N-acetylmuramic acid kinase (369 aa).

Position 12–19 (12–19 (GTSMDGVD)) interacts with ATP.

This sequence belongs to the anhydro-N-acetylmuramic acid kinase family.

The catalysed reaction is 1,6-anhydro-N-acetyl-beta-muramate + ATP + H2O = N-acetyl-D-muramate 6-phosphate + ADP + H(+). It participates in amino-sugar metabolism; 1,6-anhydro-N-acetylmuramate degradation. The protein operates within cell wall biogenesis; peptidoglycan recycling. Catalyzes the specific phosphorylation of 1,6-anhydro-N-acetylmuramic acid (anhMurNAc) with the simultaneous cleavage of the 1,6-anhydro ring, generating MurNAc-6-P. Is required for the utilization of anhMurNAc either imported from the medium or derived from its own cell wall murein, and thus plays a role in cell wall recycling. The polypeptide is Anhydro-N-acetylmuramic acid kinase (Shewanella baltica (strain OS223)).